The sequence spans 430 residues: Keratin, type I cytoskeletal 18 (430 aa).

Ser-2 carries the N-acetylserine modification. Positions Ser-2 to Asn-79 are head. Phosphoserine is present on residues Ser-7, Ser-10, Ser-15, and Ser-18. A phosphoserine; alternate mark is found at Ser-30 and Ser-31. Ser-30 and Ser-31 each carry an O-linked (GlcNAc) serine; alternate glycan. Residue Ser-34 is modified to Phosphoserine; by CDK1. Tyr-36 carries the post-translational modification Phosphotyrosine. A Phosphoserine modification is found at Ser-42. Arg-45 carries the post-translational modification Omega-N-methylarginine. A Phosphoserine; alternate modification is found at Ser-49. The O-linked (GlcNAc) serine; alternate glycan is linked to Ser-49. Ser-51 is subject to Phosphoserine; by MAPKAPK2 and MAPKAPK3. The residue at position 52 (Thr-52) is a Phosphothreonine. Ser-53 is modified (phosphoserine; by CAMK, PKC/PRKCE and AURKA). The residue at position 55 (Arg-55) is an Omega-N-methylarginine. A Phosphoserine modification is found at Ser-60. Thr-65 bears the Phosphothreonine mark. Residues Gly-70–Leu-373 form a necessary for interaction with PNN region. Residues Ile-77–His-128 form an interaction with TRADD region. The coil 1A stretch occupies residues Glu-80–His-115. The IF rod domain maps to Glu-80–Asn-391. A Glycyl lysine isopeptide (Lys-Gly) (interchain with G-Cter in SUMO2) cross-link involves residue Lys-81. Phosphoserine is present on residues Ser-93 and Ser-100. Residues Leu-116–Ile-132 form a linker 1 region. Lys-131 bears the N6-acetyllysine mark. Residues Ile-133–Leu-224 are coil 1B. Ser-177 bears the Phosphoserine mark. The linker 12 stretch occupies residues Gln-225–Ile-248. Residues Gln-243–Asn-391 form an interaction with DNAJB6 region. Lys-247 is covalently cross-linked (Glycyl lysine isopeptide (Lys-Gly) (interchain with G-Cter in SUMO2)). The interval Met-249–Gly-387 is coil 2. Thr-302 bears the Phosphothreonine mark. Phosphoserine occurs at positions 305, 319, and 323. Residues Lys-370 and Lys-372 each participate in a glycyl lysine isopeptide (Lys-Gly) (interchain with G-Cter in SUMO2) cross-link. Residues Glu-388–His-430 form a tail region. Residues Ser-398, Ser-399, and Ser-401 each carry the phosphoserine modification. Thr-404 is modified (phosphothreonine). Residue Lys-417 forms a Glycyl lysine isopeptide (Lys-Gly) (interchain with G-Cter in SUMO2) linkage. Lys-426 carries the post-translational modification N6-acetyllysine; alternate. Lys-426 is covalently cross-linked (Glycyl lysine isopeptide (Lys-Gly) (interchain with G-Cter in SUMO1); alternate). Lys-426 is covalently cross-linked (Glycyl lysine isopeptide (Lys-Gly) (interchain with G-Cter in SUMO2); alternate).

The protein belongs to the intermediate filament family. Heterotetramer of two type I and two type II keratins. KRT18 associates with KRT8. Interacts with PLEC isoform 1C, when in a heterodimer with KRT8. Interacts with the thrombin-antithrombin complex. Interacts with PNN and mutated CFTR. Interacts with YWHAE, YWHAH and YWHAZ only when phosphorylated. Interacts with DNAJB6, TCHP and TRADD. Interacts with FAM83H. Interacts with EPPK1. Interacts with PKP1 and PKP2. As to quaternary structure, (Microbial infection) Interacts with hepatitis C virus/HCV core protein. Phosphorylation at Ser-34 increases during mitosis. Hyperphosphorylated at Ser-53 in diseased cirrhosis liver. Phosphorylation increases by IL-6. Post-translationally, proteolytically cleaved by caspases during epithelial cell apoptosis. Cleavage occurs at Asp-238 by either caspase-3, caspase-6 or caspase-7. In terms of processing, O-GlcNAcylation increases solubility, and decreases stability by inducing proteasomal degradation. Expressed in colon, placenta, liver and very weakly in exocervix. Increased expression observed in lymph nodes of breast carcinoma.

The protein localises to the nucleus matrix. Its subcellular location is the cytoplasm. The protein resides in the perinuclear region. It is found in the nucleus. It localises to the nucleolus. Its function is as follows. Involved in the uptake of thrombin-antithrombin complexes by hepatic cells. When phosphorylated, plays a role in filament reorganization. Involved in the delivery of mutated CFTR to the plasma membrane. Together with KRT8, is involved in interleukin-6 (IL-6)-mediated barrier protection. In Homo sapiens (Human), this protein is Keratin, type I cytoskeletal 18 (KRT18).